A 287-amino-acid polypeptide reads, in one-letter code: Pyridoxal kinase PdxY (287 aa).

Residues Ser10 and 45 to 46 (TQ) each bind substrate. Residues Asp112, Ala144, Glu149, Lys182, and 209–212 (RPLV) contribute to the ATP site. Asp224 lines the substrate pocket.

This sequence belongs to the pyridoxine kinase family. PdxY subfamily. As to quaternary structure, homodimer. The cofactor is Mg(2+).

It catalyses the reaction pyridoxal + ATP = pyridoxal 5'-phosphate + ADP + H(+). The protein operates within cofactor metabolism; pyridoxal 5'-phosphate salvage; pyridoxal 5'-phosphate from pyridoxal: step 1/1. Functionally, pyridoxal kinase involved in the salvage pathway of pyridoxal 5'-phosphate (PLP). Catalyzes the phosphorylation of pyridoxal to PLP. In Shigella dysenteriae serotype 1 (strain Sd197), this protein is Pyridoxal kinase PdxY.